The primary structure comprises 291 residues: MEMO1 family protein TK1477 (291 aa).

Belongs to the MEMO1 family.

In Thermococcus kodakarensis (strain ATCC BAA-918 / JCM 12380 / KOD1) (Pyrococcus kodakaraensis (strain KOD1)), this protein is MEMO1 family protein TK1477.